The primary structure comprises 547 residues: Apicoplast pyruvate carrier 1 (547 aa).

Positions Met-1–Cys-33 are disordered. Residues Met-1 to Arg-45 are Cytoplasmic-facing. A compositionally biased stretch (polar residues) spans Thr-21–Cys-33. The next 12 membrane-spanning stretches (helical) occupy residues Trp-46–Tyr-66, Ala-126–Ala-146, Val-167–Ile-187, Gly-189–Glu-209, Gly-212–Leu-232, Leu-278–Ala-298, Ala-345–Ile-365, Ile-385–Gly-405, Gly-417–Pro-437, Leu-445–Phe-465, Ser-467–Gly-487, and Leu-515–Pro-535.

The protein belongs to the major facilitator superfamily. Interacts with apicoplast pyruvate carrier 2.

The protein resides in the plastid. It localises to the apicoplast. The protein localises to the membrane. Its function is as follows. Along with apicoplast pyruvate carrier 2, forms apicoplast pyruvate carrier (APC) complex, which transports pyruvate into the apicoplast and may also transport amino acids like methionine, serine, glycine and tryptophan with low efficiency. Required for maintaining pyruvate-dependent metabolic activities in the apicoplast, such as synthesis of fatty acids, isopentenyl pyrophosphate (IPP), dimethylallyl pyrophosphate (DMAPP) and methylerythritol 4-phosphate (MEP). Required for maintaining the integrity of the apicoplast. Required for normal parasite growth. The protein is Apicoplast pyruvate carrier 1 of Toxoplasma gondii.